A 451-amino-acid chain; its full sequence is Tubulin alpha-2 chain (451 aa).

Q11 is a binding site for GTP. K40 bears the N6-acetyllysine mark. Residues E71, G144, T145, T179, N206, and N228 each coordinate GTP. Position 71 (E71) interacts with Mg(2+). E254 is a catalytic residue.

The protein belongs to the tubulin family. In terms of assembly, dimer of alpha and beta chains. A typical microtubule is a hollow water-filled tube with an outer diameter of 25 nm and an inner diameter of 15 nM. Alpha-beta heterodimers associate head-to-tail to form protofilaments running lengthwise along the microtubule wall with the beta-tubulin subunit facing the microtubule plus end conferring a structural polarity. Microtubules usually have 13 protofilaments but different protofilament numbers can be found in some organisms and specialized cells. Requires Mg(2+) as cofactor. Undergoes a tyrosination/detyrosination cycle, the cyclic removal and re-addition of a C-terminal tyrosine residue by the enzymes tubulin tyrosine carboxypeptidase (TTCP) and tubulin tyrosine ligase (TTL), respectively. Post-translationally, acetylation of alpha chains at Lys-40 stabilizes microtubules and affects affinity and processivity of microtubule motors. This modification has a role in multiple cellular functions, ranging from cell motility, cell cycle progression or cell differentiation to intracellular trafficking and signaling.

Its subcellular location is the cytoplasm. The protein localises to the cytoskeleton. The enzyme catalyses GTP + H2O = GDP + phosphate + H(+). Functionally, tubulin is the major constituent of microtubules, a cylinder consisting of laterally associated linear protofilaments composed of alpha- and beta-tubulin heterodimers. Microtubules grow by the addition of GTP-tubulin dimers to the microtubule end, where a stabilizing cap forms. Below the cap, tubulin dimers are in GDP-bound state, owing to GTPase activity of alpha-tubulin. The polypeptide is Tubulin alpha-2 chain (TUBA2) (Zea mays (Maize)).